The chain runs to 1024 residues: Multidrug resistance protein MdtC (1024 aa).

12 consecutive transmembrane segments (helical) span residues 12 to 32 (VATT…FSLL), 333 to 353 (EVER…FIFL), 360 to 380 (LIPA…MYLC), 387 to 407 (LSLM…IVVL), 435 to 455 (VLSM…MAGL), 469 to 489 (VAIG…CAWL), 528 to 548 (WVMV…ISIP), 853 to 873 (LWLI…LYES), 875 to 895 (VHPL…LLAL), 897 to 917 (LFDA…IGIV), 953 to 973 (PIIM…LSSG), and 984 to 1004 (ITIV…TPVI).

This sequence belongs to the resistance-nodulation-cell division (RND) (TC 2.A.6) family. MdtC subfamily. Part of a tripartite efflux system composed of MdtA, MdtB and MdtC. MdtC forms a heteromultimer with MdtB.

The protein localises to the cell inner membrane. This Yersinia pseudotuberculosis serotype O:1b (strain IP 31758) protein is Multidrug resistance protein MdtC.